Here is a 297-residue protein sequence, read N- to C-terminus: Probable deoxyhypusine synthase (297 aa).

Catalysis depends on lysine 265, which acts as the Nucleophile.

It belongs to the deoxyhypusine synthase family. The cofactor is NAD(+).

The catalysed reaction is [eIF5A protein]-L-lysine + spermidine = [eIF5A protein]-deoxyhypusine + propane-1,3-diamine. It functions in the pathway protein modification; eIF5A hypusination. Its function is as follows. Catalyzes the NAD-dependent oxidative cleavage of spermidine and the subsequent transfer of the butylamine moiety of spermidine to the epsilon-amino group of a specific lysine residue of the eIF-5A precursor protein to form the intermediate deoxyhypusine residue. The chain is Probable deoxyhypusine synthase from Methanopyrus kandleri (strain AV19 / DSM 6324 / JCM 9639 / NBRC 100938).